A 465-amino-acid polypeptide reads, in one-letter code: Siroheme synthase (465 aa).

The segment at 1–203 (MDFLPLFHSL…GRPAEAERLL (203 aa)) is precorrin-2 dehydrogenase /sirohydrochlorin ferrochelatase. NAD(+) contacts are provided by residues 22–23 (EV) and 43–44 (PQ). Ser128 carries the post-translational modification Phosphoserine. Residues 217–465 (GEVYLVGAGP…AWFEGAREDA (249 aa)) form a uroporphyrinogen-III C-methyltransferase region. Pro226 contacts S-adenosyl-L-methionine. Asp249 serves as the catalytic Proton acceptor. Lys271 functions as the Proton donor in the catalytic mechanism. S-adenosyl-L-methionine contacts are provided by residues 302 to 304 (GGD), Ile307, 332 to 333 (TA), Met384, and Gly413.

This sequence in the N-terminal section; belongs to the precorrin-2 dehydrogenase / sirohydrochlorin ferrochelatase family. In the C-terminal section; belongs to the precorrin methyltransferase family.

The enzyme catalyses uroporphyrinogen III + 2 S-adenosyl-L-methionine = precorrin-2 + 2 S-adenosyl-L-homocysteine + H(+). It carries out the reaction precorrin-2 + NAD(+) = sirohydrochlorin + NADH + 2 H(+). The catalysed reaction is siroheme + 2 H(+) = sirohydrochlorin + Fe(2+). It participates in cofactor biosynthesis; adenosylcobalamin biosynthesis; precorrin-2 from uroporphyrinogen III: step 1/1. The protein operates within cofactor biosynthesis; adenosylcobalamin biosynthesis; sirohydrochlorin from precorrin-2: step 1/1. Its pathway is porphyrin-containing compound metabolism; siroheme biosynthesis; precorrin-2 from uroporphyrinogen III: step 1/1. It functions in the pathway porphyrin-containing compound metabolism; siroheme biosynthesis; siroheme from sirohydrochlorin: step 1/1. It participates in porphyrin-containing compound metabolism; siroheme biosynthesis; sirohydrochlorin from precorrin-2: step 1/1. Its function is as follows. Multifunctional enzyme that catalyzes the SAM-dependent methylations of uroporphyrinogen III at position C-2 and C-7 to form precorrin-2 via precorrin-1. Then it catalyzes the NAD-dependent ring dehydrogenation of precorrin-2 to yield sirohydrochlorin. Finally, it catalyzes the ferrochelation of sirohydrochlorin to yield siroheme. The sequence is that of Siroheme synthase from Pseudomonas aeruginosa (strain LESB58).